Here is a 382-residue protein sequence, read N- to C-terminus: MMSSSWCLPLALLFSTLAVSHSAEPGSTHAKRRLAQPLPGSGNALQYPDQGFQSHGHGHGRERGGGHGGQGSRGAKASSGAGLLSRRPLHPAARPEDDGTGLEGLNPVRLEMGPVGREQEKGHGGFRNPSHARDNHPLGPRKGRGQGHGHHFDQRRHGGRRDKGRLTKGFLPEPELGSVLKNRDLSEEGSVSSAAAATSPSHRLTPPTEPPSPIYAVFGSGSYAVSTVMSEHLPTLPPASTKPQKSGRGKMQGEVMPTLDMTLFDWTDYEDMKPVDAWPSSRKKDKRRSKNLSSGNVTVDTDAIEPCDHHLDCLPGSCCDLRQHECKPHNRGLNNKCYDDCMCEEGFRCYAKFHRKRRVTRRRGRCVVPESANSDQGAFITV.

The N-terminal stretch at 1–22 (MMSSSWCLPLALLFSTLAVSHS) is a signal peptide. Disordered stretches follow at residues 28–213 (THAK…PPSP), 233–252 (LPTL…GKMQ), and 275–297 (VDAW…SGNV). A compositionally biased stretch (low complexity) spans 73–82 (RGAKASSGAG). The span at 139 to 149 (GPRKGRGQGHG) shows a compositional bias: basic residues. Residues 190 to 201 (SVSSAAAATSPS) show a composition bias toward low complexity. Over residues 281-290 (SRKKDKRRSK) the composition is skewed to basic residues. Residues N291 and N296 are each glycosylated (N-linked (GlcNAc...) asparagine).

It belongs to the draxin family.

The protein resides in the secreted. Chemorepulsive axon guidance protein required for the development of spinal cord and forebrain commissures. Acts as a chemorepulsive guidance protein for commissural axons during development. Able to inhibit or repel neurite outgrowth from dorsal spinal cord. The sequence is that of Draxin-A (draxin-A) from Salmo salar (Atlantic salmon).